A 705-amino-acid polypeptide reads, in one-letter code: Complement C1r subcomponent (705 aa).

An N-terminal signal peptide occupies residues 1–17 (MWLLYLLVPALFCRAGG). Residues 18-141 (SIPIPQKLFG…KGFLAYYQAV (124 aa)) form the CUB 1 domain. Ca(2+) is bound by residues glutamate 66, aspartate 74, and aspartate 119. An intrachain disulfide couples cysteine 71 to cysteine 89. An N-linked (GlcNAc...) asparagine glycan is attached at asparagine 125. Ca(2+) is bound by residues aspartate 142, leucine 143, and glutamate 145. In terms of domain architecture, EGF-like; calcium-binding spans 142–190 (DLDECASRSKSGEEDPQPQCQHLCHNYVGGYFCSCRPGYELQEDTHSCQ). Intrachain disulfides connect cysteine 146–cysteine 165, cysteine 161–cysteine 174, cysteine 176–cysteine 189, and cysteine 193–cysteine 220. Residues asparagine 167, tyrosine 168, and glycine 171 each contribute to the Ca(2+) site. At asparagine 167 the chain carries (3R)-3-hydroxyasparagine. In terms of domain architecture, CUB 2 spans 193 to 305 (CSSELYTEAS…RGWKLRYTTE (113 aa)). Phosphoserine; by CK2 is present on serine 206. The N-linked (GlcNAc...) asparagine glycan is linked to asparagine 221. Aspartate 243, aspartate 253, aspartate 290, and aspartate 294 together coordinate Ca(2+). A disulfide bridge links cysteine 250 with cysteine 268. 2 Sushi domains span residues 307 to 373 (IKCP…RCKI) and 374 to 449 (KDCG…RCLP). Cystine bridges form between cysteine 309–cysteine 358, cysteine 338–cysteine 371, cysteine 376–cysteine 429, cysteine 406–cysteine 447, and cysteine 451–cysteine 577. Residues 464–702 (IIGGQKAKMG…YVDWIKKEME (239 aa)) enclose the Peptidase S1 domain. Catalysis depends on histidine 502, which acts as the Charge relay system. A glycan (N-linked (GlcNAc...) asparagine) is linked at asparagine 514. The active-site Charge relay system is the aspartate 557. The N-linked (GlcNAc...) asparagine glycan is linked to asparagine 581. Disulfide bonds link cysteine 620–cysteine 639 and cysteine 650–cysteine 680. Serine 654 acts as the Charge relay system in catalysis.

Belongs to the peptidase S1 family. Core component of the complement C1 complex, a calcium-dependent complex composed of 1 molecule of the C1Q subcomplex, 2 molecules of C1R and 2 molecules of C1S. The C1Q subcomplex is composed 18 subunits: 3 chains of C1QA, C1QB, and C1QC trimerize to form 6 collagen-like triple helices connected to six globular ligand-recognition modules. Within the C1 complex, C1R is a dimer of identical chains, each of which is activated by cleavage into two chains, heavy and light, connected by disulfide bonds. In terms of processing, cleaved and activated by autocatalytic processing to generate Complement C1r subcomponent heavy and light chains that are connected by disulfide bonds. Post-translationally, the iron and 2-oxoglutarate dependent 3-hydroxylation of aspartate and asparagine is (R) stereospecific within EGF domains.

The protein localises to the secreted. It is found in the cell surface. It catalyses the reaction Selective cleavage of Lys(or Arg)-|-Ile bond in complement subcomponent C1s to form the active form of C1s (EC 3.4.21.42).. Activated by the C1Q subcomplex of the C1 complex following C1Q binding to immunoglobulins (IgG or IgM) complexed with antigens to form antigen-antibody complexes on the surface of pathogens. Immunoglobulin-binding promotes autoactivation of C1R, which results in the cleavage of the Arg-Ile bond in the catalytic domain. In terms of biological role, serine protease component of the complement C1 complex, a multiprotein complex that initiates the classical pathway of the complement system, a cascade of proteins that leads to phagocytosis and breakdown of pathogens and signaling that strengthens the adaptive immune system. C1R catalyzes the first enzymatic step in the classical complement pathway: it is activated by the C1Q subcomplex of the C1 complex, which associates with IgG or IgM immunoglobulins complexed with antigens to form antigen-antibody complexes on the surface of pathogens. Immunoglobulin-binding promotes the autocatalytic cleavage and activation of C1R. Activated C1R then cleaves and activates C1S, the second protease of the classical complement pathway. It is unclear if C1R activates C1S within single, strained C1 complexes or between neighboring C1 complexes on surfaces. The polypeptide is Complement C1r subcomponent (Homo sapiens (Human)).